The following is a 390-amino-acid chain: Imidazolonepropionase (390 aa).

His-71 and His-73 together coordinate Fe(3+). Zn(2+) is bound by residues His-71 and His-73. Residues Arg-80, Tyr-138, and His-165 each coordinate 4-imidazolone-5-propanoate. Tyr-138 contributes to the N-formimidoyl-L-glutamate binding site. His-228 lines the Fe(3+) pocket. Position 228 (His-228) interacts with Zn(2+). Gln-231 contacts 4-imidazolone-5-propanoate. Asp-302 is a Fe(3+) binding site. Position 302 (Asp-302) interacts with Zn(2+). N-formimidoyl-L-glutamate is bound by residues Asn-304 and Gly-306. Residue Ser-307 coordinates 4-imidazolone-5-propanoate.

This sequence belongs to the metallo-dependent hydrolases superfamily. HutI family. It depends on Zn(2+) as a cofactor. Fe(3+) is required as a cofactor.

It is found in the cytoplasm. The catalysed reaction is 4-imidazolone-5-propanoate + H2O = N-formimidoyl-L-glutamate. It participates in amino-acid degradation; L-histidine degradation into L-glutamate; N-formimidoyl-L-glutamate from L-histidine: step 3/3. In terms of biological role, catalyzes the hydrolytic cleavage of the carbon-nitrogen bond in imidazolone-5-propanoate to yield N-formimidoyl-L-glutamate. It is the third step in the universal histidine degradation pathway. In Streptomyces griseus subsp. griseus (strain JCM 4626 / CBS 651.72 / NBRC 13350 / KCC S-0626 / ISP 5235), this protein is Imidazolonepropionase.